The following is a 111-amino-acid chain: Putative single-stranded DNA-binding protein ycf41 (111 aa).

One can recognise an SSB domain in the interval 1–98; it reads MNSCTLLVQI…FSTSRIFKYK (98 aa).

It localises to the plastid. Its subcellular location is the chloroplast. The sequence is that of Putative single-stranded DNA-binding protein ycf41 (ycf41) from Pyropia yezoensis (Susabi-nori).